The primary structure comprises 290 residues: UPF0761 membrane protein YihY (290 aa).

The next 6 membrane-spanning stretches (helical) occupy residues 44-64, 104-124, 140-160, 183-203, 210-230, and 244-264; these read LLSLVPLVAVVFALFAAFPMF, VGACGLIVTALLLMYSIDSAL, FAVYWMILTLGPLLAGASLAI, IFPLLLSWISFWLLYSIVPTI, AIVGAFVAALLFEAGKKGFAL, and VLAVIPILFVWVYWTWCIVLL.

The protein belongs to the UPF0761 family.

It is found in the cell inner membrane. This chain is UPF0761 membrane protein YihY, found in Escherichia coli O7:K1 (strain IAI39 / ExPEC).